The primary structure comprises 125 residues: Probable growth factor FPV211 (125 aa).

Residues 1–48 (MKEPLIEVKREYNLIKTLTGKKFVVSTSIVVVLLIINMIFYGIRIHEL) form the signal peptide. The 41-residue stretch at 80-120 (LFEKCKSKFNNFCIYGECMNIINLDKKFCICNKGYTGNRCD) folds into the EGF-like domain. 3 disulfide bridges follow: cysteine 84–cysteine 97, cysteine 92–cysteine 108, and cysteine 110–cysteine 119.

It is found in the secreted. The chain is Probable growth factor FPV211 from Vertebrata (FPV).